Reading from the N-terminus, the 277-residue chain is Phosphatidylglycerol--prolipoprotein diacylglyceryl transferase (277 aa).

3 consecutive transmembrane segments (helical) span residues 17–37 (LAIHWYGLSYLAAFGLFMLLG), 63–83 (ILFLGVAGVVLGGRLGYCLFY), and 101–121 (GGMAFHGGLLGVIVAMLWFAH). Arginine 146 lines the a 1,2-diacyl-sn-glycero-3-phospho-(1'-sn-glycerol) pocket. The next 3 membrane-spanning stretches (helical) occupy residues 182 to 202 (SQVYQFLLEGLLLFVLLWLYA), 209 to 229 (GQVAAAFLVGYGVLRFIAEQF), and 234 to 254 (AFLGILALGMSMGQWLCLPMI).

It belongs to the Lgt family.

It localises to the cell inner membrane. The catalysed reaction is L-cysteinyl-[prolipoprotein] + a 1,2-diacyl-sn-glycero-3-phospho-(1'-sn-glycerol) = an S-1,2-diacyl-sn-glyceryl-L-cysteinyl-[prolipoprotein] + sn-glycerol 1-phosphate + H(+). It functions in the pathway protein modification; lipoprotein biosynthesis (diacylglyceryl transfer). Its function is as follows. Catalyzes the transfer of the diacylglyceryl group from phosphatidylglycerol to the sulfhydryl group of the N-terminal cysteine of a prolipoprotein, the first step in the formation of mature lipoproteins. In Verminephrobacter eiseniae (strain EF01-2), this protein is Phosphatidylglycerol--prolipoprotein diacylglyceryl transferase.